We begin with the raw amino-acid sequence, 469 residues long: Ribosomal protein uS12 methylthiotransferase RimO (469 aa).

Positions 3-119 (TRVYMHTLGC…VARIVSDAQA (117 aa)) constitute an MTTase N-terminal domain. [4Fe-4S] cluster contacts are provided by C12, C48, C82, C154, C158, and C161. One can recognise a Radical SAM core domain in the interval 140-370 (SLPSHTAYLK…MAVQQAISRA (231 aa)). The TRAM domain maps to 373–441 (QAMIGRRVEV…EYDLVGRVVA (69 aa)). The interval 444–469 (PSRAARPLPAAPRAAPARKGGLNVLR) is disordered. A compositionally biased stretch (low complexity) spans 447–461 (AARPLPAAPRAAPAR).

The protein belongs to the methylthiotransferase family. RimO subfamily. Requires [4Fe-4S] cluster as cofactor.

The protein resides in the cytoplasm. It carries out the reaction L-aspartate(89)-[ribosomal protein uS12]-hydrogen + (sulfur carrier)-SH + AH2 + 2 S-adenosyl-L-methionine = 3-methylsulfanyl-L-aspartate(89)-[ribosomal protein uS12]-hydrogen + (sulfur carrier)-H + 5'-deoxyadenosine + L-methionine + A + S-adenosyl-L-homocysteine + 2 H(+). Catalyzes the methylthiolation of an aspartic acid residue of ribosomal protein uS12. The polypeptide is Ribosomal protein uS12 methylthiotransferase RimO (Anaeromyxobacter sp. (strain K)).